The primary structure comprises 133 residues: ATP synthase epsilon chain, chloroplastic (133 aa).

This sequence belongs to the ATPase epsilon chain family. As to quaternary structure, F-type ATPases have 2 components, CF(1) - the catalytic core - and CF(0) - the membrane proton channel. CF(1) has five subunits: alpha(3), beta(3), gamma(1), delta(1), epsilon(1). CF(0) has three main subunits: a, b and c.

The protein resides in the plastid. It localises to the chloroplast thylakoid membrane. In terms of biological role, produces ATP from ADP in the presence of a proton gradient across the membrane. This is ATP synthase epsilon chain, chloroplastic from Trieres chinensis (Marine centric diatom).